Here is a 243-residue protein sequence, read N- to C-terminus: Small ribosomal subunit protein uS3 (243 aa).

The KH type-2 domain occupies 39–110 (IRTFIQKKYG…QVRINVVEVE (72 aa)). Positions 216-243 (QTIPVGASPKRKASRRPQQFEDRSNENS) are disordered. Positions 233–243 (QQFEDRSNENS) are enriched in basic and acidic residues.

Belongs to the universal ribosomal protein uS3 family. In terms of assembly, part of the 30S ribosomal subunit. Forms a tight complex with proteins S10 and S14.

In terms of biological role, binds the lower part of the 30S subunit head. Binds mRNA in the 70S ribosome, positioning it for translation. This is Small ribosomal subunit protein uS3 from Prochlorococcus marinus (strain AS9601).